Consider the following 348-residue polypeptide: Rhodopsin (348 aa).

Position 1 is an N-acetylmethionine (Met-1). Residues 1–36 (MNGTEGPNFYVPFSNKTGVVRSPFEAPQYYLAEPWQ) are Extracellular-facing. 2 N-linked (GlcNAc...) asparagine glycosylation sites follow: Asn-2 and Asn-15. The chain crosses the membrane as a helical span at residues 37-61 (FSMLAAYMFLLIMLGFPINFLTLYV). Topologically, residues 62 to 73 (TVQHKKLRTPLN) are cytoplasmic. The chain crosses the membrane as a helical span at residues 74–96 (YILLNLAVADLFMVFGGFTTTLY). The Extracellular segment spans residues 97–110 (TSLHGYFVFGPTGC). An intrachain disulfide couples Cys-110 to Cys-187. The helical transmembrane segment at 111–133 (NLEGFFATLGGEIALWSLVVLAI) threads the bilayer. Positions 134 to 136 (ERY) match the 'Ionic lock' involved in activated form stabilization motif. At 134–152 (ERYVVVCKPMSNFRFGENH) the chain is on the cytoplasmic side. The helical transmembrane segment at 153-173 (AIMGVAFTWVMALACAAPPLV) threads the bilayer. The Extracellular portion of the chain corresponds to 174-202 (GWSRYIPEGMQCSCGIDYYTPHEETNNES). A Zn(2+)-binding site is contributed by Glu-201. A helical transmembrane segment spans residues 203–224 (FVIYMFVVHFIIPLIVIFFCYG). The Cytoplasmic portion of the chain corresponds to 225 to 252 (QLVFTVKEAAAQQQESATTQKAEKEVTR). Residues 253-274 (MVIIMVIAFLICWLPYAGVAFY) form a helical membrane-spanning segment. The Extracellular segment spans residues 275–286 (IFTHQGSDFGPI). A Zn(2+)-binding site is contributed by Gln-279. A helical transmembrane segment spans residues 287–308 (FMTIPAFFAKTSAVYNPVIYIM). Lys-296 bears the N6-(retinylidene)lysine mark. The Cytoplasmic portion of the chain corresponds to 309-348 (MNKQFRNCMVTTLCCGKNPLGDDEASTTVSKTETSQVAPA). 2 S-palmitoyl cysteine lipidation sites follow: Cys-322 and Cys-323. The interaction with SAG stretch occupies residues 330-348 (DDEASTTVSKTETSQVAPA). The residue at position 334 (Ser-334) is a Phosphoserine. Residues Thr-335 and Thr-336 each carry the phosphothreonine modification. Ser-338 is modified (phosphoserine). 2 positions are modified to phosphothreonine: Thr-340 and Thr-342. At Ser-343 the chain carries Phosphoserine; by RK and GRK7.

The protein belongs to the G-protein coupled receptor 1 family. Opsin subfamily. As to quaternary structure, homodimer. May form a complex composed of RHO, GRK1 and RCVRN in a Ca(2+)-dependent manner; RCVRN prevents the interaction between GRK1 and RHO. Interacts with GRK1. Interacts (phosphorylated form) with SAG. Interacts with GNAT1. Interacts with GNAT3. SAG and G-proteins compete for a common binding site. Interacts with PRCD; the interaction promotes PRCD stability. Forms a complex with ASAP1 and ARF4. Forms a complex with ASAP1, RAB11A, Rabin8/RAB3IP, ARF4 and RAB11FIP3; the complex regulates Golgi-to-cilia rhodopsin/RHO transport in photoreceptors. Post-translationally, phosphorylated on some or all of the serine and threonine residues present in the C-terminal region. Contains one covalently linked retinal chromophore. Upon light absorption, the covalently bound 11-cis-retinal is converted to all-trans-retinal. After hydrolysis of the Schiff base and release of the covalently bound all-trans-retinal, active rhodopsin is regenerated by binding of a fresh molecule of 11-cis-retinal. As to expression, expressed in rod-shaped photoreceptor cells in the retina that mediate vision in dim light (at protein level).

The protein resides in the membrane. Its subcellular location is the cell projection. It is found in the cilium. The protein localises to the photoreceptor outer segment. Photoreceptor required for image-forming vision at low light intensity. Required for photoreceptor cell viability after birth. Light-induced isomerization of 11-cis to all-trans retinal triggers a conformational change that activates signaling via G-proteins. Subsequent receptor phosphorylation mediates displacement of the bound G-protein alpha subunit by the arrestin SAG and terminates signaling. In Bos taurus (Bovine), this protein is Rhodopsin (RHO).